A 420-amino-acid chain; its full sequence is E3 ubiquitin-protein ligase pellino homolog 2 (420 aa).

Positions 15-202 constitute an FHA; atypical domain; that stretch reads EPVKYGELVV…MHPRGGFTEE (188 aa).

Belongs to the pellino family. Interacts with TRAF6, IRAK1, IRAK4 and MAP3K7. Interacts with BCL10; this interaction is impaired by SOCS3. In terms of processing, phosphorylated by IRAK1 and IRAK4 enhancing its E3 ligase activity.

The catalysed reaction is S-ubiquitinyl-[E2 ubiquitin-conjugating enzyme]-L-cysteine + [acceptor protein]-L-lysine = [E2 ubiquitin-conjugating enzyme]-L-cysteine + N(6)-ubiquitinyl-[acceptor protein]-L-lysine.. The protein operates within protein modification; protein ubiquitination. Its function is as follows. E3 ubiquitin ligase catalyzing the covalent attachment of ubiquitin moieties onto substrate proteins. Involved in the TLR and IL-1 signaling pathways via interaction with the complex containing IRAK kinases and TRAF6. Mediates IL1B-induced IRAK1 'Lys-63'-linked polyubiquitination and possibly 'Lys-48'-linked ubiquitination. May be important for LPS- and IL1B-induced MAP3K7-dependent, but not MAP3K3-dependent, NF-kappa-B activation. Can activate the MAP (mitogen activated protein) kinase pathway leading to activation of ELK1. The protein is E3 ubiquitin-protein ligase pellino homolog 2 (PELI2) of Homo sapiens (Human).